A 558-amino-acid polypeptide reads, in one-letter code: Formate--tetrahydrofolate ligase (558 aa).

66–73 lines the ATP pocket; that stretch reads TPAGEGKT.

Belongs to the formate--tetrahydrofolate ligase family.

The catalysed reaction is (6S)-5,6,7,8-tetrahydrofolate + formate + ATP = (6R)-10-formyltetrahydrofolate + ADP + phosphate. It functions in the pathway one-carbon metabolism; tetrahydrofolate interconversion. This is Formate--tetrahydrofolate ligase from Neisseria meningitidis serogroup C / serotype 2a (strain ATCC 700532 / DSM 15464 / FAM18).